The following is a 201-amino-acid chain: Large ribosomal subunit protein bL12m (201 aa).

The N-terminal 38 residues, methionine 1 to leucine 38, are a transit peptide targeting the mitochondrion. Disordered regions lie at residues glutamine 37–glutamate 60 and valine 109–arginine 130. 4 positions are modified to N6-acetyllysine: lysine 128, lysine 141, lysine 145, and lysine 147. Position 153 is an N6-acetyllysine; alternate (lysine 153). Lysine 153 is modified (N6-succinyllysine; alternate). A Glycyl lysine isopeptide (Lys-Gly) (interchain with G-Cter in ubiquitin) cross-link involves residue lysine 153. Lysine 165 bears the N6-succinyllysine mark. Lysine 166 and lysine 176 each carry N6-acetyllysine. N6-acetyllysine; alternate is present on lysine 181. Lysine 181 is subject to N6-succinyllysine; alternate. At lysine 188 the chain carries N6-acetyllysine.

This sequence belongs to the bacterial ribosomal protein bL12 family. In terms of assembly, component of the mitochondrial ribosome large subunit (39S) which comprises a 16S rRNA and about 50 distinct proteins. Interacts with NOA1. Two mature forms are produced by differential two-step proteolytic cleavage. Cleaved by the mitochondrial processing protease to produce the long mature form and subsequently by the mitochondrial intermediate protease to produce the short mature form. In terms of processing, in the presence of CUL3, undergoes 'Lys-63'-linked ubiquitination at Lys-153 which results in proteasomal degradation.

It is found in the mitochondrion matrix. Functionally, as a component of the mitochondrial large ribosomal subunit, plays a role in mitochondrial translation. When present in mitochondria as a free protein not associated with the ribosome, associates with mitochondrial RNA polymerase POLRMT to activate transcription. Required for POLRMT stability. The protein is Large ribosomal subunit protein bL12m (Mrpl12) of Mus musculus (Mouse).